A 112-amino-acid chain; its full sequence is UPF0342 protein SPP_1392 (112 aa).

The protein belongs to the UPF0342 family.

This Streptococcus pneumoniae (strain P1031) protein is UPF0342 protein SPP_1392.